Here is an 87-residue protein sequence, read N- to C-terminus: Small ribosomal subunit protein bS20 (87 aa).

Over residues 1-27 (MANIKSAKKRALQSERRRQHNASRRSM) the composition is skewed to basic residues. The tract at residues 1 to 31 (MANIKSAKKRALQSERRRQHNASRRSMTRTS) is disordered.

This sequence belongs to the bacterial ribosomal protein bS20 family.

Binds directly to 16S ribosomal RNA. The polypeptide is Small ribosomal subunit protein bS20 (Pseudoalteromonas atlantica (strain T6c / ATCC BAA-1087)).